Reading from the N-terminus, the 211-residue chain is Protein-methionine-sulfoxide reductase heme-binding subunit MsrQ (211 aa).

The next 6 membrane-spanning stretches (helical) occupy residues 8-28, 54-74, 82-102, 116-136, 153-173, and 178-198; these read VIWL…WLVW, FLLA…PLLI, LWCF…ELGV, PYLT…FTST, FVYL…KIIS, and IYAG…LSLF.

This sequence belongs to the MsrQ family. Heterodimer of a catalytic subunit (MsrP) and a heme-binding subunit (MsrQ). FMN serves as cofactor. The cofactor is heme b.

The protein resides in the cell inner membrane. Part of the MsrPQ system that repairs oxidized periplasmic proteins containing methionine sulfoxide residues (Met-O), using respiratory chain electrons. Thus protects these proteins from oxidative-stress damage caused by reactive species of oxygen and chlorine generated by the host defense mechanisms. MsrPQ is essential for the maintenance of envelope integrity under bleach stress, rescuing a wide series of structurally unrelated periplasmic proteins from methionine oxidation, including the primary periplasmic chaperone SurA and the lipoprotein Pal. MsrQ provides electrons for reduction to the reductase catalytic subunit MsrP, using the quinone pool of the respiratory chain. The chain is Protein-methionine-sulfoxide reductase heme-binding subunit MsrQ from Shigella flexneri.